The primary structure comprises 218 residues: uncharacterized protein (218 aa).

The signal sequence occupies residues 1–17 (MLKKIIILFLGIFLLSS). The N-palmitoyl cysteine moiety is linked to residue cysteine 18. Cysteine 18 is lipidated: S-diacylglycerol cysteine. Residues 136-164 (YKEKKIEEELNQIKAMLKETKRDITKYTC) adopt a coiled-coil conformation.

It is found in the cell membrane. This is an uncharacterized protein from Rickettsia typhi (strain ATCC VR-144 / Wilmington).